Consider the following 433-residue polypeptide: Keratin, type I cytoskeletal 17 (433 aa).

The tract at residues 1–24 (MTTTIRQFTSSSSIKGSSGLGGGS) is disordered. The head stretch occupies residues 1–83 (MTTTIRQFTS…GGVDGLLAGG (83 aa)). S12 and S13 each carry phosphoserine. K15 participates in a covalent cross-link: Glycyl lysine isopeptide (Lys-Gly) (interchain with G-Cter in SUMO1); alternate. A Glycyl lysine isopeptide (Lys-Gly) (interchain with G-Cter in SUMO2); alternate cross-link involves residue K15. Residues S25, S32, S34, and S39 each carry the phosphoserine modification. S44 bears the Phosphoserine; by RPS6KA1 mark. The coil 1A stretch occupies residues 84 to 120 (EKATMQNLNDRLASYLDKVRALEEANTELEVKIRDWY). Residues 84 to 395 (EKATMQNLND…RLLEGEDAHL (312 aa)) form the IF rod domain. Residue T110 is modified to Phosphothreonine. The tract at residues 121 to 138 (QKQAPGPARDYSAYYQTI) is linker 1. A coil 1B region spans residues 139-230 (EDLKNKILVA…NHEEEMNALR (92 aa)). The segment at 231–250 (GQVGGEINVEMDAAPGVDLS) is linker 12. Residues 251 to 392 (RILSEMRDQY…TYRRLLEGED (142 aa)) form a coil 2 region. Residue K278 forms a Glycyl lysine isopeptide (Lys-Gly) (interchain with G-Cter in SUMO2) linkage. Residue T279 is modified to Phosphothreonine. At S323 the chain carries Phosphoserine. Positions 393-433 (AHLTQYKPKEPVTTRQVRTIVEEVQDGKVISSREQVHQTTR) are tail. Residues K399, K401, and K420 each participate in a glycyl lysine isopeptide (Lys-Gly) (interchain with G-Cter in SUMO1); alternate cross-link. Residues K399, K401, and K420 each participate in a glycyl lysine isopeptide (Lys-Gly) (interchain with G-Cter in SUMO2); alternate cross-link.

Belongs to the intermediate filament family. In terms of assembly, heterodimer of a type I and a type II keratin. KRT17 associates with KRT6 isomers (KRT6A or KRT6B). Interacts with TRADD and SFN. In terms of processing, phosphorylation at Ser-44 occurs in a growth- and stress-dependent fashion in skin keratinocytes, it has no effect on filament organization.

The protein resides in the cytoplasm. Functionally, type I keratin involved in the formation and maintenance of various skin appendages, specifically in determining shape and orientation of hair. Required for the correct growth of hair follicles, in particular for the persistence of the anagen (growth) state. Modulates the function of TNF-alpha in the specific context of hair cycling. Regulates protein synthesis and epithelial cell growth through binding to the adapter protein SFN and by stimulating Akt/mTOR pathway. Involved in tissue repair. May be a marker of basal cell differentiation in complex epithelia and therefore indicative of a certain type of epithelial 'stem cells'. Acts as a promoter of epithelial proliferation by acting a regulator of immune response in skin: promotes Th1/Th17-dominated immune environment contributing to the development of basaloid skin tumors. May act as an autoantigen in the immunopathogenesis of psoriasis, with certain peptide regions being a major target for autoreactive T-cells and hence causing their proliferation. In Rattus norvegicus (Rat), this protein is Keratin, type I cytoskeletal 17.